The following is a 334-amino-acid chain: Kihadalactone A synthase LFS (334 aa).

Positions 181–286 constitute a Fe2OG dioxygenase domain; the sequence is KTASYSNMFH…RYSTGLFLCP (106 aa). Fe cation is bound by residues His-208, Asp-210, and His-269. Arg-277 provides a ligand contact to 2-oxoglutarate.

This sequence belongs to the iron/ascorbate-dependent oxidoreductase family. Fe(2+) serves as cofactor. As to expression, expressed in maturing fruits and in juice vesicles.

It carries out the reaction (1R,2R,3S,8R,10R,11R,15S,16S)-3-(acetyloxy)-15-(1-hydroxy-4-oxobutan-2-yl)-2,7,7,11,16-pentamethyl-5-oxo-6-oxatetracyclo[9.7.0.0(2,8).0(12,16)]octadec-12-en-10-yl acetate + 2-oxoglutarate + O2 = kihadalactone A + succinate + CO2 + 2 H2O. It participates in secondary metabolite biosynthesis; terpenoid biosynthesis. Its function is as follows. 2-oxoglutarate-Fe(II) type oxidoreductase involved in the biosynthesis of limonoids triterpene natural products such as limonin, a compound with insecticidal activity responsible for the bitter taste in citrus. Catalyzes the formation of kihadalactone A. The polypeptide is Kihadalactone A synthase LFS (Citrus sinensis (Sweet orange)).